The chain runs to 745 residues: Aminopeptidase NAALADL1 (745 aa).

The Cytoplasmic segment spans residues 1 to 6 (MHWVKI). The helical; Signal-anchor for type II membrane protein transmembrane segment at 7–28 (LGVALGAAALLGLGIILGHFAI) threads the bilayer. Topologically, residues 29-745 (PKATSPLTSS…AATLVPVADL (717 aa)) are extracellular. Residues Asn128, Asn141, and Asn235 are each glycosylated (N-linked (GlcNAc...) asparagine). Residues Thr263 and Leu266 each coordinate Ca(2+). Residues Asn279, Asn302, and Asn329 are each glycosylated (N-linked (GlcNAc...) asparagine). Cys301 and Cys318 are joined by a disulfide. Zn(2+) contacts are provided by His373 and Asp383. The active-site Proton donor/acceptor is Glu421. Residue Glu422 coordinates Zn(2+). The Ca(2+) site is built by Glu430 and Glu433. Position 450 (Asp450) interacts with Zn(2+). Asn456 and Asn497 each carry an N-linked (GlcNAc...) asparagine glycan. Zn(2+) is bound at residue His550. Asn593 and Asn620 each carry an N-linked (GlcNAc...) asparagine glycan.

The protein belongs to the peptidase M28 family. M28B subfamily. In terms of assembly, homodimer. Zn(2+) serves as cofactor. N-glycosylated.

The protein resides in the apical cell membrane. Its function is as follows. Aminopeptidase with broad substrate specificity. Has lower activity with substrates that have Asp or Glu in the P2' position, or Pro in the P3' position. Lacks activity with substrates that have both Pro in the P3' position and Asp or Glu in the P2' position. Lacks carboxypeptidase activity. Lacks dipeptidyl-peptidase IV type activity. This chain is Aminopeptidase NAALADL1 (Naaladl1), found in Mus musculus (Mouse).